We begin with the raw amino-acid sequence, 354 residues long: Uroporphyrinogen decarboxylase (354 aa).

Substrate-binding positions include 27–31 (RQAGR), F46, D77, Y154, S209, and H327.

It belongs to the uroporphyrinogen decarboxylase family. Homodimer.

It localises to the cytoplasm. It catalyses the reaction uroporphyrinogen III + 4 H(+) = coproporphyrinogen III + 4 CO2. It participates in porphyrin-containing compound metabolism; protoporphyrin-IX biosynthesis; coproporphyrinogen-III from 5-aminolevulinate: step 4/4. In terms of biological role, catalyzes the decarboxylation of four acetate groups of uroporphyrinogen-III to yield coproporphyrinogen-III. This Shewanella oneidensis (strain ATCC 700550 / JCM 31522 / CIP 106686 / LMG 19005 / NCIMB 14063 / MR-1) protein is Uroporphyrinogen decarboxylase.